Here is a 314-residue protein sequence, read N- to C-terminus: MNVIKISPRGYCYGVVDAMVIAKNAALDKNLPRPIYILGMIVHNKHVTDAFEEDGIYTLDGPNRLDILKQVESGTVIFTAHGVSPEVRQIAEEKGLVAIDATCPDVTKTHELISEKTADGYDIIYIGKKGHPEPEGAVGVAPDKVHLVESEADIEALDLTSDKLLITNQTTMSQWDVHDLMELIKEKYPHVEYHQEICLATQVRQEAVSEQAGQADLTIVVGDPKSNNSNRLAQVSMEIAGTQAYRIGDLSELKLEWLQGVNTVAITAGASTPTPITKEVIRFLENYEPDDESTWKIERSVPLSKILPRVKTKK.

Position 12 (Cys-12) interacts with [4Fe-4S] cluster. (2E)-4-hydroxy-3-methylbut-2-enyl diphosphate is bound by residues His-43 and His-81. Dimethylallyl diphosphate-binding residues include His-43 and His-81. The isopentenyl diphosphate site is built by His-43 and His-81. Position 103 (Cys-103) interacts with [4Fe-4S] cluster. Position 131 (His-131) interacts with (2E)-4-hydroxy-3-methylbut-2-enyl diphosphate. His-131 contacts dimethylallyl diphosphate. Position 131 (His-131) interacts with isopentenyl diphosphate. The active-site Proton donor is Glu-133. Thr-170 provides a ligand contact to (2E)-4-hydroxy-3-methylbut-2-enyl diphosphate. Cys-198 is a binding site for [4Fe-4S] cluster. Residues Ser-226, Asn-228, and Ser-271 each contribute to the (2E)-4-hydroxy-3-methylbut-2-enyl diphosphate site. Positions 226, 228, and 271 each coordinate dimethylallyl diphosphate. Ser-226, Asn-228, and Ser-271 together coordinate isopentenyl diphosphate.

Belongs to the IspH family. [4Fe-4S] cluster is required as a cofactor.

The enzyme catalyses isopentenyl diphosphate + 2 oxidized [2Fe-2S]-[ferredoxin] + H2O = (2E)-4-hydroxy-3-methylbut-2-enyl diphosphate + 2 reduced [2Fe-2S]-[ferredoxin] + 2 H(+). The catalysed reaction is dimethylallyl diphosphate + 2 oxidized [2Fe-2S]-[ferredoxin] + H2O = (2E)-4-hydroxy-3-methylbut-2-enyl diphosphate + 2 reduced [2Fe-2S]-[ferredoxin] + 2 H(+). It participates in isoprenoid biosynthesis; dimethylallyl diphosphate biosynthesis; dimethylallyl diphosphate from (2E)-4-hydroxy-3-methylbutenyl diphosphate: step 1/1. Its pathway is isoprenoid biosynthesis; isopentenyl diphosphate biosynthesis via DXP pathway; isopentenyl diphosphate from 1-deoxy-D-xylulose 5-phosphate: step 6/6. Catalyzes the conversion of 1-hydroxy-2-methyl-2-(E)-butenyl 4-diphosphate (HMBPP) into a mixture of isopentenyl diphosphate (IPP) and dimethylallyl diphosphate (DMAPP). Acts in the terminal step of the DOXP/MEP pathway for isoprenoid precursor biosynthesis. The sequence is that of 4-hydroxy-3-methylbut-2-enyl diphosphate reductase from Bacillus pumilus (strain SAFR-032).